Reading from the N-terminus, the 359-residue chain is F-box/kelch-repeat protein At1g15670 (359 aa).

In terms of domain architecture, F-box spans 2–49 (ELIPDLPETVAYECLLRSSYKQFPLMASVCKLWQREISLSDFFRHRKA). 5 Kelch repeats span residues 119–167 (DLVV…ASDS), 170–217 (NVFV…FHAG), 219–269 (FHVI…CAAG), 271–310 (NGDLYACCRRDLMMMKDDTWYKVGNLPADVCNVSYVAIRR), and 313–358 (NLVV…CFLE).

The protein is F-box/kelch-repeat protein At1g15670 of Arabidopsis thaliana (Mouse-ear cress).